Reading from the N-terminus, the 150-residue chain is D-aminoacyl-tRNA deacylase (150 aa).

The Gly-cisPro motif, important for rejection of L-amino acids signature appears at 138 to 139 (GP).

Belongs to the DTD family. In terms of assembly, homodimer.

The protein resides in the cytoplasm. It catalyses the reaction glycyl-tRNA(Ala) + H2O = tRNA(Ala) + glycine + H(+). The catalysed reaction is a D-aminoacyl-tRNA + H2O = a tRNA + a D-alpha-amino acid + H(+). In terms of biological role, an aminoacyl-tRNA editing enzyme that deacylates mischarged D-aminoacyl-tRNAs. Also deacylates mischarged glycyl-tRNA(Ala), protecting cells against glycine mischarging by AlaRS. Acts via tRNA-based rather than protein-based catalysis; rejects L-amino acids rather than detecting D-amino acids in the active site. By recycling D-aminoacyl-tRNA to D-amino acids and free tRNA molecules, this enzyme counteracts the toxicity associated with the formation of D-aminoacyl-tRNA entities in vivo and helps enforce protein L-homochirality. The polypeptide is D-aminoacyl-tRNA deacylase (Phocaeicola vulgatus (strain ATCC 8482 / DSM 1447 / JCM 5826 / CCUG 4940 / NBRC 14291 / NCTC 11154) (Bacteroides vulgatus)).